Reading from the N-terminus, the 638-residue chain is Guanylate-binding protein 7 (638 aa).

The GTPase domain (Globular) stretch occupies residues 1-310 (MASEIHMPGP…DAINSGATPC (310 aa)). A GB1/RHD3-type G domain is found at 35–277 (TQPVVVVAIV…FCSYIFTHAK (243 aa)). Residues 45 to 52 (GLYRTGKS), 67 to 69 (LGC), and 97 to 101 (DTEGL) each bind GTP. Positions 311–638 (LENAMAVLAQ…LRNPGKKIIS (328 aa)) are interaction with the CYBA-CYBB complex. The segment at 590 to 638 (PSVFSQILDVAGSIFIAALPGAAKLVDLGMKILSSLCNRLRNPGKKIIS) is C-terminal tail; required for its localization to cytoplasmic vesicle.

This sequence belongs to the TRAFAC class dynamin-like GTPase superfamily. GB1/RHD3 GTPase family. GB1 subfamily. Monomer and dimer. Interacts with CYBA, CYBA-CYBB complex and ATG4B. Interacts (via GB1/RHD3-type G domain) with NCF2 and NCF2-NCF4 complex.

The protein resides in the cytoplasmic vesicle membrane. The catalysed reaction is GTP + H2O = GDP + phosphate + H(+). It carries out the reaction GDP + H2O = GMP + phosphate + H(+). Its function is as follows. Interferon (IFN)-inducible GTPase that plays important roles in innate immunity against a diverse range of bacterial, viral and protozoan pathogens. Hydrolyzes GTP to GMP in two consecutive cleavage reactions and predominantly uses GTP and not GDP or GMP as the substrate. Following infection, recruited to the pathogen-containing vacuoles or vacuole-escaped bacteria and acts as a positive regulator of inflammasome assembly by promoting the release of inflammasome ligands from bacteria. Acts by promoting lysis of pathogen-containing vacuoles, releasing pathogens into the cytosol. Following pathogen release in the cytosol, promotes recruitment of proteins that mediate bacterial cytolysis: this liberates ligands that are detected by inflammasomes, such as lipopolysaccharide (LPS) that activates the non-canonical CASP4/CASP11 inflammasome or double-stranded DNA (dsDNA) that activates the AIM2 inflammasome. Also promotes IFN-gamma-mediated host defense against bacterial infections by regulating oxidative responses and bacteriolytic peptide generation. May help to assemble NADPH oxidase on phagosomal membranes by acting as a bridging protein between NADPH oxidase cytosolic subunits NCF2-NCF4 and the membrane subunits CYBA-CYBB. Participates along with GBP1 in trafficking monoubiquinated protein cargo to autolysosomes for generating ubiquitin-derived antimicrobial peptides. Facilitates influenza A virus replication by inhibiting the activation of NF-kappaB and JAK-STAT signaling pathways and the expression of type I, type III interferons and pro-inflammatory cytokines. Confers protection to several pathogens, including the bacterial pathogens Listeria monocytogenes and Mycobacterium bovis BCG as well as the protozoan pathogen Toxoplasma gondii. Required for disruption of the parasitophorous vacuole formed following T.gondii infection and subsequent killing of the parasite. The protein is Guanylate-binding protein 7 (GBP7) of Homo sapiens (Human).